We begin with the raw amino-acid sequence, 198 residues long: Peptidyl-tRNA hydrolase (198 aa).

Tyrosine 15 contacts tRNA. Histidine 20 (proton acceptor) is an active-site residue. Phenylalanine 66, asparagine 68, and asparagine 114 together coordinate tRNA.

Belongs to the PTH family. Monomer.

It localises to the cytoplasm. The enzyme catalyses an N-acyl-L-alpha-aminoacyl-tRNA + H2O = an N-acyl-L-amino acid + a tRNA + H(+). Hydrolyzes ribosome-free peptidyl-tRNAs (with 1 or more amino acids incorporated), which drop off the ribosome during protein synthesis, or as a result of ribosome stalling. In terms of biological role, catalyzes the release of premature peptidyl moieties from peptidyl-tRNA molecules trapped in stalled 50S ribosomal subunits, and thus maintains levels of free tRNAs and 50S ribosomes. This chain is Peptidyl-tRNA hydrolase, found in Cupriavidus taiwanensis (strain DSM 17343 / BCRC 17206 / CCUG 44338 / CIP 107171 / LMG 19424 / R1) (Ralstonia taiwanensis (strain LMG 19424)).